Consider the following 1460-residue polypeptide: Probable outer membrane protein PmpC (1460 aa).

Positions 1 to 20 are cleaved as a signal peptide; it reads MKFLSATAVFAAALPSITSA. Disordered regions lie at residues 21–48, 92–212, 279–372, 455–549, and 993–1021; these read SSVE…FTEI, SEEN…PDKD, TPPA…ESGS, TPEE…DSSI, and VDTS…TAQA. Residues 34 to 44 are compositionally biased toward low complexity; it reads SSRTGSSSSQS. Positions 97–114 are enriched in polar residues; it reads QASFQDSAQNQTENASEG. Residues 115 to 137 are compositionally biased toward low complexity; sequence NSPNSENTNQSSTTETESITTDE. Residues 138–155 are compositionally biased toward polar residues; it reads QVQNDNESAASVPTTVET. The segment covering 290 to 327 has biased composition (low complexity); the sequence is NDPSGSNGNDGSDDSNSSGNTDSNESNPNNSASNNTGS. Over residues 328–358 the composition is skewed to polar residues; the sequence is ENELSSSTPSAQLPNPATPFLSSVSTNSQPI. A compositionally biased stretch (low complexity) spans 461–471; sequence LKSSQLNNQNP. Polar residues predominate over residues 487–501; that stretch reads SLETSPITNQDSASS. Composition is skewed to low complexity over residues 504–548 and 995–1018; these read AIFR…SDSS and TSTN…STPT. The Autotransporter domain maps to 1167 to 1460; that stretch reads DEVAYNNLWI…MINCGARMTF (294 aa).

This sequence belongs to the PMP outer membrane protein family.

The protein localises to the secreted. It is found in the cell wall. It localises to the cell outer membrane. This Chlamydia muridarum (strain MoPn / Nigg) protein is Probable outer membrane protein PmpC (pmpC).